We begin with the raw amino-acid sequence, 330 residues long: DNA-directed RNA polymerase subunit alpha (330 aa).

Positions 1 to 229 (MKNIKFIKPF…DHFNVLVELS (229 aa)) are alpha N-terminal domain (alpha-NTD). An alpha C-terminal domain (alpha-CTD) region spans residues 245–330 (AHNSVLDLEI…HSVEEDKDKH (86 aa)).

This sequence belongs to the RNA polymerase alpha chain family. As to quaternary structure, homodimer. The RNAP catalytic core consists of 2 alpha, 1 beta, 1 beta' and 1 omega subunit. When a sigma factor is associated with the core the holoenzyme is formed, which can initiate transcription.

It carries out the reaction RNA(n) + a ribonucleoside 5'-triphosphate = RNA(n+1) + diphosphate. In terms of biological role, DNA-dependent RNA polymerase catalyzes the transcription of DNA into RNA using the four ribonucleoside triphosphates as substrates. The protein is DNA-directed RNA polymerase subunit alpha of Onion yellows phytoplasma (strain OY-M).